The primary structure comprises 636 residues: MKKLQGAHLRKPVTPDLLMTPSDQGDVDLDVDFAAHRGNWTGKLDFLLSCIGYCVGLGNVWRFPYRAYTNGGGAFLVPYFLMLAICGIPLFFLELSLGQFSSLGPLAVWKISPLFKGAGAAMLLIVGLVAIYYNMIIAYVLFYLFASLTSDLPWEHCGNWWNTELCLEHRVSKDGNGALPLNLTCTVSPSEEYWSRYVLHIQGSQGIGSPGEIRWNLCLCLLLAWVIVFLCILKGVKSSGKVVYFTATFPYLILLMLLVRGVTLPGAWKGIQFYLTPQFHHLLSSKVWIEAALQIFYSLGVGFGGLLTFASYNTFHQNIYRDTFIVTLGNAITSILAGFAIFSVLGYMSQELGVPVDQVAKAGPGLAFVVYPQAMTMLPLSPFWSFLFFFMLLTLGLDSQFAFLETIVTAVTDEFPYYLRPKKAVFSGLICVAMYLMGLILTTDGGMYWLVLLDDYSASFGLMVVVITTCLAVTRVYGIQRFCRDIHMMLGFKPGLYFRACWLFLSPATLLALMVYSIVKYQPSEYGSYRFPPWAELLGILMGLLSCLMIPAGMLVAVLREEGSLWERLQQASRPAMDWGPSLEENRTGMYVATLAGSQSPKPLMVHMRKYGGITSFENTAIEVDREIAEEEESMM.

Over 1-45 (MKKLQGAHLRKPVTPDLLMTPSDQGDVDLDVDFAAHRGNWTGKLD) the chain is Cytoplasmic. The residue at position 20 (threonine 20) is a Phosphothreonine. The residue at position 22 (serine 22) is a Phosphoserine. The next 3 membrane-spanning stretches (helical) occupy residues 46–66 (FLLS…FPYR), 74–93 (AFLV…LFFL), and 117–137 (GAGA…NMII). Residues 138 to 214 (AYVLFYLFAS…QGIGSPGEIR (77 aa)) are Extracellular-facing. Asparagine 182 carries an N-linked (GlcNAc...) asparagine glycan. 9 helical membrane passes run 215-233 (WNLC…LCIL), 242-259 (VVYF…MLLV), 295-312 (IFYS…FASY), 324-345 (FIVT…FSVL), 378-397 (LPLS…TLGL), 425-443 (VFSG…ILTT), 459-479 (SFGL…VYGI), 500-519 (ACWL…YSIV), and 538-556 (LGIL…GMLV). The Cytoplasmic portion of the chain corresponds to 557-636 (AVLREEGSLW…EIAEEEESMM (80 aa)). Residues serine 573 and serine 582 each carry the phosphoserine modification. Threonine 588 is subject to Phosphothreonine. The residue at position 591 (tyrosine 591) is a Phosphotyrosine. Residues serine 598 and serine 600 each carry the phosphoserine modification.

This sequence belongs to the sodium:neurotransmitter symporter (SNF) (TC 2.A.22) family. SLC6A7 subfamily. Brain specific (at protein level). Highly expressed in hippocampus, corpus striatum and temporal cortex. Also expressed in frontal cortex, occipital cortex and, at lower levels, in cerebellum and parietal cortex (at protein level).

Its subcellular location is the synaptic cell membrane. It carries out the reaction L-proline(out) + chloride(out) + 2 Na(+)(out) = L-proline(in) + chloride(in) + 2 Na(+)(in). The enzyme catalyses L-pipecolate(out) + chloride(out) + 2 Na(+)(out) = L-pipecolate(in) + chloride(in) + 2 Na(+)(in). Functionally, brain specific sodium (and chloride)-dependent proline transporter. Terminates the action of proline by its high affinity sodium-dependent reuptake into presynaptic terminals. This Homo sapiens (Human) protein is Sodium-dependent proline transporter.